The sequence spans 440 residues: MSQQKPHINLVVIGHVDHGKSTLVGHLLYRLGFVDEKTIKMLEEEAKKKGKESFKYAWLLDRLKEERERGVTIDLTFVKFETKKYYFTIIDAPGHRDFVKNMITGASQADAAILVVSARRGEFEAGMSAEGQTREHLILAKTMGIDQLIVAVNKMDATEPPYSKQRYEQIVAFLKKFMKSLGYKVDQIPFIPVSAWTGENLIERSPNMPWYNGPTLVEALDTYIQPPKKPVDKPLRIPIQNVYSIPGVGTVPVGRVETGVLKVGDKVVFMPPGVVGEVRSIEMHHQPLQQAEPGDNIGFNVRGISKKDIRRGDVAGHVDKPPTVAEEFTARIFVIWHPSAITVGYTPVIHAHTASIAARITEIQAKLDPRTGQVIEKNPQFLKAGDAAIVKFKPIKPMVIEKYSEFPQLGRFAMRDMGKTIGIGIVVDVKPAKVEIRAKK.

Residues 5–228 enclose the tr-type G domain; it reads KPHINLVVIG…ALDTYIQPPK (224 aa). Residues 14–21 are G1; it reads GHVDHGKS. 14–21 is a GTP binding site; that stretch reads GHVDHGKS. S21 provides a ligand contact to Mg(2+). Residues 70 to 74 are G2; it reads GVTID. The segment at 91 to 94 is G3; that stretch reads DAPG. Residues 91–95 and 153–156 contribute to the GTP site; these read DAPGH and NKMD. The interval 153–156 is G4; that stretch reads NKMD. Positions 194-196 are G5; that stretch reads SAW.

This sequence belongs to the TRAFAC class translation factor GTPase superfamily. Classic translation factor GTPase family. EF-Tu/EF-1A subfamily.

The protein localises to the cytoplasm. It catalyses the reaction GTP + H2O = GDP + phosphate + H(+). Functionally, GTP hydrolase that promotes the GTP-dependent binding of aminoacyl-tRNA to the A-site of ribosomes during protein biosynthesis. The protein is Elongation factor 1-alpha of Hyperthermus butylicus (strain DSM 5456 / JCM 9403 / PLM1-5).